The following is a 451-amino-acid chain: MNLEVKKIDTANARLSAKPSVEDLEKRYDKIAQKIAQKVKIDGFRRGKVPLSLVKTRYQAQIDQDAQEEMIQEVLKNAFKELGIENKDLIGSPNLTKFEKKDAHFEIEADIGLKPTIVLDKIKECVPSVGVEIPNEEKINERLKQLAKDYAKFVDTDAQRKAQNDDKLTIDFEGFIDNAPFEGGKAENFTLILGNKQMLEDFEKALLGMQASEEKEFPLTFPSGYHAEHLAGKEALFKVKLHQIQAREALEINDELAKIVLANEENATLKLLKERVKGQLFLENKARLYNEELKEKLIENLDEKILFDLPKTIIEQEMDLLFRNALYSMQAEEVKSLQESQEKAKEKRESFRNDATKSVKITFIIDALAKEEKIGVHDNEVFQTLYYEAMMTGQNPESLIEQYRKNNMLAAVKMAMIEDRVLAYLLDKNLPKEQQEILEKMRPNAQKTQAG.

Residues 165-250 (DDKLTIDFEG…LHQIQAREAL (86 aa)) form the PPIase FKBP-type domain.

The protein belongs to the FKBP-type PPIase family. Tig subfamily.

It is found in the cytoplasm. It carries out the reaction [protein]-peptidylproline (omega=180) = [protein]-peptidylproline (omega=0). Its function is as follows. Involved in protein export. Acts as a chaperone by maintaining the newly synthesized protein in an open conformation. Functions as a peptidyl-prolyl cis-trans isomerase. In Helicobacter pylori (strain G27), this protein is Trigger factor.